A 66-amino-acid chain; its full sequence is Putative alpha-neurotoxin RjAa16 (66 aa).

Residues 1 to 60 (KEGYPVDWGNCKYECMSDAYCKDLCVDRKAKSGYCYKLNWFCYCEGLPDDSPIKTNGHCR) enclose the LCN-type CS-alpha/beta domain. Cystine bridges form between cysteine 11-cysteine 59, cysteine 15-cysteine 35, cysteine 21-cysteine 42, and cysteine 25-cysteine 44.

This sequence belongs to the long (4 C-C) scorpion toxin superfamily. Sodium channel inhibitor family. Alpha subfamily. As to expression, expressed by the venom gland.

It localises to the secreted. In terms of biological role, alpha toxins bind voltage-independently at site-3 of sodium channels (Nav) and inhibits the inactivation of the activated channels, thereby blocking neuronal transmission. This is Putative alpha-neurotoxin RjAa16 from Rhopalurus junceus (Caribbean blue scorpion).